The following is a 120-amino-acid chain: MPRSVNAVASKKHRKKILNFAKGFYGARSKLYTVAKNAVEKSFKYSYFGRKNKKRNFRKLWIKRINAAARENGISYSNLIFLIRKNNIKLNRKCLADLAMKNNSSFKKMIKKFQILYLDL.

It belongs to the bacterial ribosomal protein bL20 family.

Its function is as follows. Binds directly to 23S ribosomal RNA and is necessary for the in vitro assembly process of the 50S ribosomal subunit. It is not involved in the protein synthesizing functions of that subunit. The chain is Large ribosomal subunit protein bL20 from Karelsulcia muelleri (strain GWSS) (Sulcia muelleri).